The following is a 333-amino-acid chain: Taste receptor type 2 member 110 (333 aa).

Residues 1-13 are Extracellular-facing; sequence MFSQIISTSDIFT. The chain crosses the membrane as a helical span at residues 14-34; the sequence is FTIILFVELVIGILGNGFIAL. The Cytoplasmic segment spans residues 35–60; sequence VNIMDWTKRRSISSADQILTALAITR. The chain crosses the membrane as a helical span at residues 61-81; that stretch reads FLYVWFMIICILLFMLCPHLL. Residues 82–89 lie on the Extracellular side of the membrane; it reads TRSEIVTS. A helical transmembrane segment spans residues 90–110; the sequence is IGIIWIVNNHFSVWLATCLGV. At 111–133 the chain is on the cytoplasmic side; that stretch reads FYFLKIANFSNSLFLYLKWRVKK. The chain crosses the membrane as a helical span at residues 134–154; sequence VVLMIIQVSMIFLILNLLSLS. The Extracellular portion of the chain corresponds to 155-205; it reads MYDQFSIDVYEGNTSYNLGDSTPFPTISLFINSSKVFVITNSSHIFLPINS. N-linked (GlcNAc...) asparagine glycosylation is found at asparagine 186 and asparagine 195. Residues 206-226 traverse the membrane as a helical segment; it reads LFMLIPFTVSLVAFLMLIFSL. Residues 227–255 are Cytoplasmic-facing; it reads WKHHKKMQVNAKPPRDASTMAHIKALQTG. The helical transmembrane segment at 256–276 threads the bilayer; that stretch reads FSFLLLYAVYLLFIVIGMLSL. Residues 277-283 are Extracellular-facing; it reads RLIGGKL. The helical transmembrane segment at 284–304 threads the bilayer; the sequence is ILLFDHISGIGFPISHSFVLI. Residues 305–333 are Cytoplasmic-facing; it reads LGNNKLRQASLSVLHCLRCRSKDMDTMGP.

This sequence belongs to the G-protein coupled receptor T2R family.

It localises to the membrane. Its function is as follows. Gustducin-coupled receptor implicated in the perception of bitter compounds in the oral cavity and the gastrointestinal tract. Signals through PLCB2 and the calcium-regulated cation channel TRPM5. This Mus musculus (Mouse) protein is Taste receptor type 2 member 110.